Consider the following 389-residue polypeptide: Succinate--CoA ligase [ADP-forming] subunit beta (389 aa).

ATP-binding positions include K46, 53-55, E99, C102, and E107; that span reads GRG. N199 and D213 together coordinate Mg(2+). Residues N264 and 321-323 each bind substrate; that span reads GIV.

This sequence belongs to the succinate/malate CoA ligase beta subunit family. In terms of assembly, heterotetramer of two alpha and two beta subunits. The cofactor is Mg(2+).

The catalysed reaction is succinate + ATP + CoA = succinyl-CoA + ADP + phosphate. The enzyme catalyses GTP + succinate + CoA = succinyl-CoA + GDP + phosphate. The protein operates within carbohydrate metabolism; tricarboxylic acid cycle; succinate from succinyl-CoA (ligase route): step 1/1. Its function is as follows. Succinyl-CoA synthetase functions in the citric acid cycle (TCA), coupling the hydrolysis of succinyl-CoA to the synthesis of either ATP or GTP and thus represents the only step of substrate-level phosphorylation in the TCA. The beta subunit provides nucleotide specificity of the enzyme and binds the substrate succinate, while the binding sites for coenzyme A and phosphate are found in the alpha subunit. The protein is Succinate--CoA ligase [ADP-forming] subunit beta of Haemophilus influenzae (strain 86-028NP).